Reading from the N-terminus, the 123-residue chain is Large ribosomal subunit protein bL12 (123 aa).

It belongs to the bacterial ribosomal protein bL12 family. In terms of assembly, homodimer. Part of the ribosomal stalk of the 50S ribosomal subunit. Forms a multimeric L10(L12)X complex, where L10 forms an elongated spine to which 2 to 4 L12 dimers bind in a sequential fashion. Binds GTP-bound translation factors.

In terms of biological role, forms part of the ribosomal stalk which helps the ribosome interact with GTP-bound translation factors. Is thus essential for accurate translation. This chain is Large ribosomal subunit protein bL12, found in Rhodopseudomonas palustris (strain BisA53).